The sequence spans 625 residues: MNSKTPTLGIVCSEGTISLSLEEGFEFVGVPLSGEGLKLRVEALAPSERLQEFLDDEVAYHPEENVHKVVGLSSAWLELDSEDTLIADRSEEVLLKEASYASYCGLSSIILNGPTSPMNVMRYARAVSSALNSTMNLKFLVQLAIESGHEDYFETWKMWDTIRSACGYHPRLKVALELPPACSPPIELVNRWYAEPIEMITMSCMAFVPNPNGYPVLGRKLRAIYALYLRLNPRILLWDNDAPEKIGDSPDYSIYMKHLFDSQPPAPLVEDLADSYKDYLQVPLQPLSYNLENITYEIFERDPVKYAQYEQAIFSALMDRDESSVTRIAVVGAGRGPLVDCALRAAISSSRTVDMIALEKNPNAFSMLLMRNRQDWAGKVTLVFGDMRTWNPDYKIDILVSELLGSMGDNELSPECLDGVQHVLDEETGICIPSSYISYVTPIMSPKLWSEARNMNDPNAFERQYVVLMNSFDFLAADDEFRFQSLWSFHHPNKDSEVYTKNLHNKRFASVRFQASSPGILHGFAGYFEATLYKDISLSIMPATMEAKSPDMFSWFPIYMPIKKPMYVPENSQLEFHMWRLTDGMRVWFEWCANAYLVLRNGSQIKLSSTEVHNISGKAFSCNMY.

The SAM-dependent MTase PRMT-type domain maps to 280–588; the sequence is LQVPLQPLSY…WRLTDGMRVW (309 aa). Residues Tyr-296, 305-306, Glu-359, and 386-387 contribute to the S-adenosyl-L-methionine site; these read KY and DM. Active-site proton donor/acceptor residues include Glu-402 and Glu-411.

The protein belongs to the class I-like SAM-binding methyltransferase superfamily. Protein arginine N-methyltransferase family. Interacts with the N-terminal regulatory domain of shk1. Shk1, cdc42 and skb1 are able to form a ternary complex in vivo. Interacts with orb6. Interacts with Cdr1 and the Cdr1 inhibitory target Wee1.

Its subcellular location is the nucleus. It is found in the cell tip. It localises to the cell septum. The protein localises to the cytoplasm. The protein resides in the cell cortex. Functionally, S-adenosyl-L-methionine-dependent protein-arginine N-methyltransferase that can catalyze both the mono- and symmetric (type II) dimethylation of the guanidino nitrogens of arginine residues in target proteins. Delays mitotic entry by inhibiting the Cdr1-Wee1 signaling pathway. Cortical nodes sequester Skb1 from its regulatory targets Cdr1 and Wee1. Positively modulates the shk1 kinase function. May be a mediator of hyperosmotic stress response. Involved in the control of cell polarity by regulating the subcellular localization of Orb6 kinase. The chain is Protein arginine N-methyltransferase skb1 from Schizosaccharomyces pombe (strain 972 / ATCC 24843) (Fission yeast).